The primary structure comprises 598 residues: Fumarate reductase flavoprotein subunit (598 aa).

Residues 12-16, 36-38, 44-52, 156-158, and Asp212 each bind FAD; these read GAGGA, ISK, SHTVAAEGG, and HFV. The residue at position 45 (His45) is a Tele-8alpha-FAD histidine. Active-site residues include His233 and Arg249. Residues 356 to 357, Glu380, and 391 to 397 each bind FAD; these read HY and RLGSNSL. The disordered stretch occupies residues 577 to 598; the sequence is AKRVYGGEATAQDKQNKEKANG.

The protein belongs to the FAD-dependent oxidoreductase 2 family. FRD/SDH subfamily. In terms of assembly, part of an enzyme complex containing four subunits: a flavoprotein (FrdA), an iron-sulfur protein (FrdB), and two hydrophobic anchor proteins (FrdC and FrdD). The cofactor is FAD.

Its subcellular location is the cell inner membrane. The enzyme catalyses a quinone + succinate = fumarate + a quinol. It carries out the reaction a menaquinone + succinate = a menaquinol + fumarate. Functionally, two distinct, membrane-bound, FAD-containing enzymes are responsible for the catalysis of fumarate and succinate interconversion; the fumarate reductase is used in anaerobic growth, and the succinate dehydrogenase is used in aerobic growth. The sequence is that of Fumarate reductase flavoprotein subunit (frdA) from Proteus vulgaris.